A 123-amino-acid chain; its full sequence is UPF0738 protein BALH_1059 (123 aa).

Belongs to the UPF0738 family.

The chain is UPF0738 protein BALH_1059 from Bacillus thuringiensis (strain Al Hakam).